The following is a 166-amino-acid chain: Endoribonuclease YbeY (166 aa).

His-132, His-136, and His-142 together coordinate Zn(2+).

It belongs to the endoribonuclease YbeY family. Requires Zn(2+) as cofactor.

The protein resides in the cytoplasm. Functionally, single strand-specific metallo-endoribonuclease involved in late-stage 70S ribosome quality control and in maturation of the 3' terminus of the 16S rRNA. This chain is Endoribonuclease YbeY, found in Clostridium botulinum (strain Kyoto / Type A2).